The sequence spans 129 residues: Sulfurtransferase TusD (129 aa).

Residue C79 is the Cysteine persulfide intermediate of the active site.

It belongs to the DsrE/TusD family. Heterohexamer, formed by a dimer of trimers. The hexameric TusBCD complex contains 2 copies each of TusB, TusC and TusD. The TusBCD complex interacts with TusE.

It localises to the cytoplasm. Functionally, part of a sulfur-relay system required for 2-thiolation of 5-methylaminomethyl-2-thiouridine (mnm(5)s(2)U) at tRNA wobble positions. Accepts sulfur from TusA and transfers it in turn to TusE. The polypeptide is Sulfurtransferase TusD (Pectobacterium atrosepticum (strain SCRI 1043 / ATCC BAA-672) (Erwinia carotovora subsp. atroseptica)).